Consider the following 359-residue polypeptide: Phosphate acyltransferase (359 aa).

A disordered region spans residues serine 335–alanine 359.

It belongs to the PlsX family. As to quaternary structure, homodimer. Probably interacts with PlsY.

The protein resides in the cytoplasm. The enzyme catalyses a fatty acyl-[ACP] + phosphate = an acyl phosphate + holo-[ACP]. It participates in lipid metabolism; phospholipid metabolism. Its function is as follows. Catalyzes the reversible formation of acyl-phosphate (acyl-PO(4)) from acyl-[acyl-carrier-protein] (acyl-ACP). This enzyme utilizes acyl-ACP as fatty acyl donor, but not acyl-CoA. The protein is Phosphate acyltransferase of Cupriavidus metallidurans (strain ATCC 43123 / DSM 2839 / NBRC 102507 / CH34) (Ralstonia metallidurans).